The chain runs to 162 residues: Ribosome-binding factor A (162 aa).

Residues 123-162 form a disordered region; the sequence is VARVAAGASPAGDPDPYKEPRVEDADDAEVDEPSRSRQAD. Low complexity predominate over residues 125 to 136; it reads RVAAGASPAGDP.

It belongs to the RbfA family. Monomer. Binds 30S ribosomal subunits, but not 50S ribosomal subunits or 70S ribosomes.

It localises to the cytoplasm. Its function is as follows. One of several proteins that assist in the late maturation steps of the functional core of the 30S ribosomal subunit. Associates with free 30S ribosomal subunits (but not with 30S subunits that are part of 70S ribosomes or polysomes). Required for efficient processing of 16S rRNA. May interact with the 5'-terminal helix region of 16S rRNA. This is Ribosome-binding factor A from Rhodococcus opacus (strain B4).